We begin with the raw amino-acid sequence, 135 residues long: Large ribosomal subunit protein eL32 (135 aa).

It belongs to the eukaryotic ribosomal protein eL32 family.

The chain is Large ribosomal subunit protein eL32 (rpl32e) from Methanococcus maripaludis (strain DSM 14266 / JCM 13030 / NBRC 101832 / S2 / LL).